Here is a 114-residue protein sequence, read N- to C-terminus: Ferredoxin (114 aa).

Residues Cys-9 and Cys-17 each coordinate [3Fe-4S] cluster. [4Fe-4S] cluster contacts are provided by Cys-21, Cys-40, Cys-43, and Cys-46. The 4Fe-4S ferredoxin-type domain occupies 31 to 60 (RMLYINPDECVDCGACKPACRVEAIYWEGD). [3Fe-4S] cluster is bound at residue Cys-50.

Requires [4Fe-4S] cluster as cofactor. [3Fe-4S] cluster is required as a cofactor.

Its function is as follows. Ferredoxins are iron-sulfur proteins that transfer electrons in a wide variety of metabolic reactions. This is Ferredoxin (fdxA) from Mycobacterium tuberculosis (strain ATCC 25618 / H37Rv).